The sequence spans 338 residues: D-erythrose-4-phosphate dehydrogenase (338 aa).

12–13 contributes to the NAD(+) binding site; the sequence is RI. Substrate-binding positions include 154-156, R200, 213-214, and R236; these read SCT and TK. C155 acts as the Nucleophile in catalysis. N318 is an NAD(+) binding site.

Belongs to the glyceraldehyde-3-phosphate dehydrogenase family. Epd subfamily. As to quaternary structure, homotetramer.

It localises to the cytoplasm. It catalyses the reaction D-erythrose 4-phosphate + NAD(+) + H2O = 4-phospho-D-erythronate + NADH + 2 H(+). It functions in the pathway cofactor biosynthesis; pyridoxine 5'-phosphate biosynthesis; pyridoxine 5'-phosphate from D-erythrose 4-phosphate: step 1/5. Catalyzes the NAD-dependent conversion of D-erythrose 4-phosphate to 4-phosphoerythronate. This chain is D-erythrose-4-phosphate dehydrogenase, found in Pectobacterium atrosepticum (strain SCRI 1043 / ATCC BAA-672) (Erwinia carotovora subsp. atroseptica).